The primary structure comprises 291 residues: Probable xyloglucan endotransglucosylase/hydrolase protein 16 (291 aa).

The first 24 residues, methionine 1 to serine 24, serve as a signal peptide directing secretion. One can recognise a GH16 domain in the interval glycine 25 to tyrosine 215. The active-site Nucleophile is glutamate 101. The Proton donor role is filled by glutamate 105. Glutamate 105 contributes to the xyloglucan binding site. Asparagine 109 is a glycosylation site (N-linked (GlcNAc...) asparagine). Residues histidine 118–asparagine 120, asparagine 128–glutamate 130, aspartate 194–tryptophan 195, and glycine 199 contribute to the xyloglucan site. Disulfide bonds link cysteine 223–cysteine 232 and cysteine 272–cysteine 286. Position 277 (arginine 277) interacts with xyloglucan.

Belongs to the glycosyl hydrolase 16 family. XTH group 2 subfamily. Contains at least one intrachain disulfide bond essential for its enzymatic activity.

The protein resides in the secreted. It localises to the cell wall. Its subcellular location is the extracellular space. It is found in the apoplast. It carries out the reaction breaks a beta-(1-&gt;4) bond in the backbone of a xyloglucan and transfers the xyloglucanyl segment on to O-4 of the non-reducing terminal glucose residue of an acceptor, which can be a xyloglucan or an oligosaccharide of xyloglucan.. Functionally, catalyzes xyloglucan endohydrolysis (XEH) and/or endotransglycosylation (XET). Cleaves and religates xyloglucan polymers, an essential constituent of the primary cell wall, and thereby participates in cell wall construction of growing tissues. This Arabidopsis thaliana (Mouse-ear cress) protein is Probable xyloglucan endotransglucosylase/hydrolase protein 16 (XTH16).